The following is a 95-amino-acid chain: MLYTVSHSPYHCDLSALLRLATSEDDILLLQDGVIAALKESETLKLLLNNPASLFVLEDDVIARGLVGQISDNATLISYTHFVDLTLRHQQQLAW.

It belongs to the DsrH/TusB family. Heterohexamer, formed by a dimer of trimers. The hexameric TusBCD complex contains 2 copies each of TusB, TusC and TusD. The TusBCD complex interacts with TusE.

Its subcellular location is the cytoplasm. Functionally, part of a sulfur-relay system required for 2-thiolation of 5-methylaminomethyl-2-thiouridine (mnm(5)s(2)U) at tRNA wobble positions. The sequence is that of Protein TusB from Yersinia pseudotuberculosis serotype O:1b (strain IP 31758).